Consider the following 623-residue polypeptide: Kelch repeat and BTB domain-containing protein 12 (623 aa).

The region spanning 31–98 (IDVVLTAEGE…MYNAALEINN (68 aa)) is the BTB domain. A BACK domain is found at 133–235 (CLGIYYFAKQ…NPSFLRQALR (103 aa)). 4 Kelch repeats span residues 386–436 (DLYV…TVNN), 437–492 (KLYV…VVNS), 494–547 (IYVL…STNA), and 553–603 (KLYV…LVAR).

This Homo sapiens (Human) protein is Kelch repeat and BTB domain-containing protein 12 (KBTBD12).